Consider the following 301-residue polypeptide: Chitin deacetylase 1 (301 aa).

A signal peptide spans Met1–Ala24. N-linked (GlcNAc...) asparagine glycosylation is found at Asn26, Asn50, and Asn68. Cys107 and Cys290 are disulfide-bonded. In terms of domain architecture, NodB homology spans Phe108–Ala288. The active-site Proton acceptor is the Asp115. Acetate is bound at residue Asp115. Co(2+) contacts are provided by Asp116, His162, and His166. The N-linked (GlcNAc...) asparagine glycan is linked to Asn189. An acetate-binding site is contributed by Tyr203. Residue His263 is the Proton donor of the active site.

Belongs to the polysaccharide deacetylase family. It depends on Co(2+) as a cofactor.

The protein localises to the prospore. The enzyme catalyses [(1-&gt;4)-N-acetyl-beta-D-glucosaminyl](n) + n H2O = chitosan + n acetate. Hydrolyzes the N-acetamido groups of N-acetyl-D-glucosamine residues in chitin to form chitosan and acetate. Chitosan is a component of the spore wall. In Saccharomyces cerevisiae (strain ATCC 204508 / S288c) (Baker's yeast), this protein is Chitin deacetylase 1.